A 211-amino-acid polypeptide reads, in one-letter code: Small ribosomal subunit protein uS3 (211 aa).

Residues 38 to 106 form the KH type-2 domain; that stretch reads LRSFVKKTFH…EVELHIVEVK (69 aa).

Belongs to the universal ribosomal protein uS3 family. As to quaternary structure, part of the 30S ribosomal subunit. Forms a tight complex with proteins S10 and S14.

Binds the lower part of the 30S subunit head. Binds mRNA in the 70S ribosome, positioning it for translation. The polypeptide is Small ribosomal subunit protein uS3 (Anaplasma phagocytophilum (strain HZ)).